The chain runs to 335 residues: Cobalt-precorrin-5B C(1)-methyltransferase (335 aa).

It belongs to the CbiD family.

The catalysed reaction is Co-precorrin-5B + S-adenosyl-L-methionine = Co-precorrin-6A + S-adenosyl-L-homocysteine. It functions in the pathway cofactor biosynthesis; adenosylcobalamin biosynthesis; cob(II)yrinate a,c-diamide from sirohydrochlorin (anaerobic route): step 6/10. In terms of biological role, catalyzes the methylation of C-1 in cobalt-precorrin-5B to form cobalt-precorrin-6A. The polypeptide is Cobalt-precorrin-5B C(1)-methyltransferase (Methanospirillum hungatei JF-1 (strain ATCC 27890 / DSM 864 / NBRC 100397 / JF-1)).